A 349-amino-acid polypeptide reads, in one-letter code: uncharacterized protein (349 aa).

The chain crosses the membrane as a helical span at residues 17-37; that stretch reads VIAIVSTGLVFAMTLVLTGLV. Positions 111–131 are disordered; it reads FGAPEHGPGMPRVSDGRAPST. 3 consecutive transmembrane segments (helical) span residues 230 to 250, 284 to 304, and 308 to 328; these read AITV…GSVV, VVAL…APLF, and VVVP…IGLL.

Belongs to the ABC-4 integral membrane protein family.

The protein resides in the cell membrane. This is an uncharacterized protein from Mycobacterium bovis (strain ATCC BAA-935 / AF2122/97).